The sequence spans 1108 residues: Isoleucine--tRNA ligase (1108 aa).

Positions P53–H63 match the 'HIGH' region motif. Residues K654–R658 carry the 'KMSKS' region motif. K657 is an ATP binding site.

This sequence belongs to the class-I aminoacyl-tRNA synthetase family. IleS type 2 subfamily. As to quaternary structure, monomer. Requires Zn(2+) as cofactor.

The protein resides in the cytoplasm. It catalyses the reaction tRNA(Ile) + L-isoleucine + ATP = L-isoleucyl-tRNA(Ile) + AMP + diphosphate. Functionally, catalyzes the attachment of isoleucine to tRNA(Ile). As IleRS can inadvertently accommodate and process structurally similar amino acids such as valine, to avoid such errors it has two additional distinct tRNA(Ile)-dependent editing activities. One activity is designated as 'pretransfer' editing and involves the hydrolysis of activated Val-AMP. The other activity is designated 'posttransfer' editing and involves deacylation of mischarged Val-tRNA(Ile). The sequence is that of Isoleucine--tRNA ligase from Rickettsia bellii (strain OSU 85-389).